The primary structure comprises 604 residues: Glucoamylase 1 (604 aa).

An N-terminal signal peptide occupies residues 1–25 (MQLFNLPLKVSFFLVLSYFSLLVSA). Positions 26–115 (ASIPSSASVQ…EFYIKYEVSG (90 aa)) are adsorption to raw starch. Positions 26–130 (ASIPSSASVQ…NNNSANYQVS (105 aa)) constitute a CBM21 domain. The tract at residues 116 to 604 (KTYYDNNNSA…SYAKAGAPAA (489 aa)) is starch degradation. N122 carries N-linked (GlcNAc...) asparagine glycosylation. The disordered stretch occupies residues 127–164 (YQVSTSKPTTTTATATTTTAPSTSTTTPPSRSEPATFP). Over residues 130 to 162 (STSKPTTTTATATTTTAPSTSTTTPPSRSEPAT) the composition is skewed to low complexity. N-linked (GlcNAc...) asparagine glycosylation is found at N167, N230, and N236. A substrate-binding site is contributed by W279. The active-site Proton acceptor is D336. E339 acts as the Proton donor in catalysis. N-linked (GlcNAc...) asparagine glycosylation occurs at N564.

This sequence belongs to the glycosyl hydrolase 15 family.

The catalysed reaction is Hydrolysis of terminal (1-&gt;4)-linked alpha-D-glucose residues successively from non-reducing ends of the chains with release of beta-D-glucose.. The polypeptide is Glucoamylase 1 (Rhizopus oryzae (Mucormycosis agent)).